We begin with the raw amino-acid sequence, 187 residues long: Peptidyl-tRNA hydrolase (187 aa).

Y15 is a tRNA binding site. Residue H20 is the Proton acceptor of the active site. The tRNA site is built by F64, N66, and N112.

The protein belongs to the PTH family. Monomer.

It localises to the cytoplasm. The catalysed reaction is an N-acyl-L-alpha-aminoacyl-tRNA + H2O = an N-acyl-L-amino acid + a tRNA + H(+). Functionally, hydrolyzes ribosome-free peptidyl-tRNAs (with 1 or more amino acids incorporated), which drop off the ribosome during protein synthesis, or as a result of ribosome stalling. In terms of biological role, catalyzes the release of premature peptidyl moieties from peptidyl-tRNA molecules trapped in stalled 50S ribosomal subunits, and thus maintains levels of free tRNAs and 50S ribosomes. The chain is Peptidyl-tRNA hydrolase from Parabacteroides distasonis (strain ATCC 8503 / DSM 20701 / CIP 104284 / JCM 5825 / NCTC 11152).